The following is a 338-amino-acid chain: Lipoate-protein ligase A (338 aa).

Residues 29–216 (DPNQRVLFLW…AFFSHYGERV (188 aa)) enclose the BPL/LPL catalytic domain. Residues arginine 71, 76-79 (GAVF), and lysine 134 contribute to the ATP site. Lysine 134 lines the (R)-lipoate pocket.

It belongs to the LplA family. In terms of assembly, monomer.

The protein localises to the cytoplasm. It catalyses the reaction L-lysyl-[lipoyl-carrier protein] + (R)-lipoate + ATP = N(6)-[(R)-lipoyl]-L-lysyl-[lipoyl-carrier protein] + AMP + diphosphate + H(+). It functions in the pathway protein modification; protein lipoylation via exogenous pathway; protein N(6)-(lipoyl)lysine from lipoate: step 1/2. The protein operates within protein modification; protein lipoylation via exogenous pathway; protein N(6)-(lipoyl)lysine from lipoate: step 2/2. Its function is as follows. Catalyzes both the ATP-dependent activation of exogenously supplied lipoate to lipoyl-AMP and the transfer of the activated lipoyl onto the lipoyl domains of lipoate-dependent enzymes. In Aeromonas hydrophila subsp. hydrophila (strain ATCC 7966 / DSM 30187 / BCRC 13018 / CCUG 14551 / JCM 1027 / KCTC 2358 / NCIMB 9240 / NCTC 8049), this protein is Lipoate-protein ligase A.